A 248-amino-acid polypeptide reads, in one-letter code: Ureidoacrylate amidohydrolase RutB (248 aa).

Asp-41 (proton acceptor) is an active-site residue. Lys-150 is an active-site residue. Cys-183 (nucleophile) is an active-site residue.

The protein belongs to the isochorismatase family. RutB subfamily.

It catalyses the reaction (Z)-3-ureidoacrylate + H2O + H(+) = (Z)-3-aminoacrylate + NH4(+) + CO2. It carries out the reaction (Z)-3-ureidoacrylate + H2O = (Z)-3-aminoacrylate + carbamate + H(+). The catalysed reaction is (Z)-2-methylureidoacrylate + H2O + H(+) = (Z)-2-methylaminoacrylate + NH4(+) + CO2. In terms of biological role, hydrolyzes ureidoacrylate to form aminoacrylate and carbamate. The carbamate hydrolyzes spontaneously, thereby releasing one of the nitrogen atoms of the pyrimidine ring as ammonia and one of its carbon atoms as CO2. The polypeptide is Ureidoacrylate amidohydrolase RutB (Stutzerimonas stutzeri (strain A1501) (Pseudomonas stutzeri)).